Here is a 341-residue protein sequence, read N- to C-terminus: Anthranilate phosphoribosyltransferase (341 aa).

Residues G79, 82–83 (GD), T87, 89–92 (NIST), 107–115 (KHGNRAASS), and S119 each bind 5-phospho-alpha-D-ribose 1-diphosphate. Anthranilate is bound at residue G79. S91 serves as a coordination point for Mg(2+). N110 serves as a coordination point for anthranilate. R165 contributes to the anthranilate binding site. Mg(2+) contacts are provided by D224 and E225.

This sequence belongs to the anthranilate phosphoribosyltransferase family. As to quaternary structure, homodimer. The cofactor is Mg(2+).

It carries out the reaction N-(5-phospho-beta-D-ribosyl)anthranilate + diphosphate = 5-phospho-alpha-D-ribose 1-diphosphate + anthranilate. Its pathway is amino-acid biosynthesis; L-tryptophan biosynthesis; L-tryptophan from chorismate: step 2/5. In terms of biological role, catalyzes the transfer of the phosphoribosyl group of 5-phosphorylribose-1-pyrophosphate (PRPP) to anthranilate to yield N-(5'-phosphoribosyl)-anthranilate (PRA). The protein is Anthranilate phosphoribosyltransferase of Dehalococcoides mccartyi (strain ATCC BAA-2266 / KCTC 15142 / 195) (Dehalococcoides ethenogenes (strain 195)).